We begin with the raw amino-acid sequence, 490 residues long: WD repeat-containing protein JIP5 (490 aa).

7 WD repeats span residues 23–64, 70–112, 118–155, 157–196, 242–284, 286–327, and 340–377; these read KYND…ERMQ, QKKK…GSCR, PIESSVGKHLFTVGKDHVVKKANTETGKVLTKTDISKD, SSKDAVTKLCHSTTHPFLLSGTENGHVLVYDSNDLSNKFK, DQED…LMDQ, SRIK…HRVN, and GTADEVGFLDIDYEYRLLTAGMDSMKLWSAEGDDEEEE. Residues 368 to 490 are disordered; the sequence is SAEGDDEEEE…SHGIRRFDGL (123 aa). Composition is skewed to acidic residues over residues 370-406 and 413-437; these read EGDDEEEEESEGEESEESEESDEESDESSGEESEGDD and EESDSNDEDEVESSDDEKEKEEEST. A compositionally biased stretch (basic and acidic residues) spans 438-448; the sequence is ETDHKNIEAES. The span at 450–461 shows a compositional bias: polar residues; the sequence is KQANKRQASQPK. Positions 469–484 are enriched in basic residues; sequence KQKLKQTSKLAHSHGI.

Belongs to the WD repeat WDR55 family.

The protein resides in the nucleus. The protein localises to the nucleolus. This is WD repeat-containing protein JIP5 (JIP5) from Meyerozyma guilliermondii (strain ATCC 6260 / CBS 566 / DSM 6381 / JCM 1539 / NBRC 10279 / NRRL Y-324) (Yeast).